Reading from the N-terminus, the 494-residue chain is MNAPVKPSQLIKGATGDWEVVIGLEIHAQVSSNAKLFSGAATEFGGDPNSHVSLVDAAMPGMLPVINEECVKQAIRSGLGLNAQINLRSVFDRKNYFYPDLPQGYQISQYKSPIVGEGEVVVDLPDGDSTTVGIERLHLEQDAGKLLHDQDPTSTFVDLNRSGVALMEIVSKPDLRSSEQAKAYVSKLRTILRYLGTCDGDMEKGSLRADVNVSVRKPGEPYGTRCEIKNVNSIRFIGQAIEYEARRQIGVLEDGGAIVQETRLFDAGKGETRSMRSKEEAHDYRYFPDPDLLPLEFSQAYVDELKAGLPELPDQKKARFIGSFGLSPDDAGVLVSERESADFYEAVLAALADAARDGKLAANWVINELFGRLNKDGQSIEVSPVSAAQLAAIVDLIGEGTISGKIAKELFEIVWTEGGDPRVLVEARGMKQVTDLSAIEKVVDEIIAGNPDKVAQAIAKPAMLGWFVGQVMKSSGGKANPQAVNDLLKRKLGL.

Belongs to the GatB/GatE family. GatB subfamily. In terms of assembly, heterotrimer of A, B and C subunits.

It carries out the reaction L-glutamyl-tRNA(Gln) + L-glutamine + ATP + H2O = L-glutaminyl-tRNA(Gln) + L-glutamate + ADP + phosphate + H(+). It catalyses the reaction L-aspartyl-tRNA(Asn) + L-glutamine + ATP + H2O = L-asparaginyl-tRNA(Asn) + L-glutamate + ADP + phosphate + 2 H(+). Functionally, allows the formation of correctly charged Asn-tRNA(Asn) or Gln-tRNA(Gln) through the transamidation of misacylated Asp-tRNA(Asn) or Glu-tRNA(Gln) in organisms which lack either or both of asparaginyl-tRNA or glutaminyl-tRNA synthetases. The reaction takes place in the presence of glutamine and ATP through an activated phospho-Asp-tRNA(Asn) or phospho-Glu-tRNA(Gln). The sequence is that of Aspartyl/glutamyl-tRNA(Asn/Gln) amidotransferase subunit B from Rhodopseudomonas palustris (strain HaA2).